We begin with the raw amino-acid sequence, 541 residues long: uncharacterized protein (541 aa).

Helical transmembrane passes span 4–23 (FVAN…LAIG), 30–47 (FSLG…FAAV), 57–79 (VYIL…AFFA), 91–113 (LAIT…IHLN), and 156–178 (LVAY…GLCA). RCK C-terminal domains lie at 187–271 (QEAH…VLGD) and 273–354 (LPGD…LFGD). The next 5 membrane-spanning stretches (helical) occupy residues 362–384 (FNLF…EVPL), 389–411 (ALSL…VGRS), 424–446 (LALR…GASF), 456–478 (LTII…VVGY), and 516–538 (LGYT…VVLF).

Belongs to the AAE transporter (TC 2.A.81) family.

It is found in the cell membrane. This is an uncharacterized protein from Corynebacterium diphtheriae (strain ATCC 700971 / NCTC 13129 / Biotype gravis).